The primary structure comprises 547 residues: Chaperonin GroEL (547 aa).

Residues 30-33 (TLGP), Lys51, 87-91 (DGTTT), Gly415, 479-481 (NAA), and Asp495 contribute to the ATP site. Positions 526–547 (KEEKSDLSVPPQGGMGGMGGMM) are disordered. Positions 538 to 547 (GGMGGMGGMM) are enriched in gly residues.

The protein belongs to the chaperonin (HSP60) family. In terms of assembly, forms a cylinder of 14 subunits composed of two heptameric rings stacked back-to-back. Interacts with the co-chaperonin GroES.

It localises to the cytoplasm. The enzyme catalyses ATP + H2O + a folded polypeptide = ADP + phosphate + an unfolded polypeptide.. In terms of biological role, together with its co-chaperonin GroES, plays an essential role in assisting protein folding. The GroEL-GroES system forms a nano-cage that allows encapsulation of the non-native substrate proteins and provides a physical environment optimized to promote and accelerate protein folding. The polypeptide is Chaperonin GroEL (Buchnera aphidicola subsp. Tetraneura caerulescens).